The following is an 865-amino-acid chain: DNA topoisomerase 1 (865 aa).

The region spanning 3 to 142 (KALVIVESPA…RYSRVVFNEI (140 aa)) is the Toprim domain. Residue Glu-9 coordinates Mg(2+). The tract at residues 37–65 (LPTSGSAAKKSADSTSTKTAKKPKKDERG) is disordered. The segment covering 39-54 (TSGSAAKKSADSTSTK) has biased composition (low complexity). Asp-111 contacts Mg(2+). Positions 158–575 (NIDRVNAQQA…HFFSDFTQQL (418 aa)) constitute a Topo IA-type catalytic domain. The tract at residues 192 to 197 (SAGRVQ) is interaction with DNA. Tyr-319 serves as the catalytic O-(5'-phospho-DNA)-tyrosine intermediate. 3 consecutive C4-type zinc fingers follow at residues 599-630 (CPTC…KERC), 662-689 (CPKC…NPTC), and 711-736 (CEKC…NEEC).

Belongs to the type IA topoisomerase family. Monomer. It depends on Mn(2+) as a cofactor. The cofactor is Ca(2+).

It catalyses the reaction ATP-independent breakage of single-stranded DNA, followed by passage and rejoining.. Releases the supercoiling and torsional tension of DNA, which is introduced during the DNA replication and transcription, by transiently cleaving and rejoining one strand of the DNA duplex. Introduces a single-strand break via transesterification at a target site in duplex DNA. The scissile phosphodiester is attacked by the catalytic tyrosine of the enzyme, resulting in the formation of a DNA-(5'-phosphotyrosyl)-enzyme intermediate and the expulsion of a 3'-OH DNA strand. The free DNA strand then undergoes passage around the unbroken strand, thus removing DNA supercoils. Finally, in the religation step, the DNA 3'-OH attacks the covalent intermediate to expel the active-site tyrosine and restore the DNA phosphodiester backbone. This Escherichia coli (strain K12) protein is DNA topoisomerase 1.